A 176-amino-acid chain; its full sequence is Large ribosomal subunit protein uL10 (176 aa).

Belongs to the universal ribosomal protein uL10 family. As to quaternary structure, part of the ribosomal stalk of the 50S ribosomal subunit. The N-terminus interacts with L11 and the large rRNA to form the base of the stalk. The C-terminus forms an elongated spine to which L12 dimers bind in a sequential fashion forming a multimeric L10(L12)X complex.

Forms part of the ribosomal stalk, playing a central role in the interaction of the ribosome with GTP-bound translation factors. The chain is Large ribosomal subunit protein uL10 from Teredinibacter turnerae (strain ATCC 39867 / T7901).